The following is a 327-amino-acid chain: Tartrate-resistant acid phosphatase type 5 (327 aa).

The N-terminal stretch at 1-22 (MDTWMVLLGLQILLLPLLAHCT) is a signal peptide. The Fe cation site is built by aspartate 35, aspartate 73, tyrosine 76, and asparagine 112. Asparagine 118 and asparagine 149 each carry an N-linked (GlcNAc...) asparagine glycan. Residues cysteine 163 and cysteine 221 are joined by a disulfide bond. Fe cation-binding residues include histidine 207, histidine 242, and histidine 244.

In terms of assembly, exists either as monomer or, after proteolytic processing, as a dimer of two chains linked by disulfide bond(s). Fe cation serves as cofactor. Characteristic constituent of osteoclasts and some mononuclear preosteoclasts. Preferentially expressed in skeletal tissues.

The protein resides in the lysosome. The enzyme catalyses a phosphate monoester + H2O = an alcohol + phosphate. Its function is as follows. May play a role in the process of bone resorption. The osteoclastic trap acts on nucleotide tri- and diphosphates with higher affinity, compared with other substrates. In Rattus norvegicus (Rat), this protein is Tartrate-resistant acid phosphatase type 5 (Acp5).